A 118-amino-acid chain; its full sequence is Large ribosomal subunit protein bL20 (118 aa).

This sequence belongs to the bacterial ribosomal protein bL20 family.

Binds directly to 23S ribosomal RNA and is necessary for the in vitro assembly process of the 50S ribosomal subunit. It is not involved in the protein synthesizing functions of that subunit. This is Large ribosomal subunit protein bL20 from Thermus thermophilus (strain ATCC BAA-163 / DSM 7039 / HB27).